Reading from the N-terminus, the 141-residue chain is Hemoglobin subunit zeta (141 aa).

Serine 1 carries the post-translational modification N-acetylserine. One can recognise a Globin domain in the interval 1 to 141 (SLTKAERTII…VSGVLTEKYR (141 aa)). Threonine 28 carries the post-translational modification Phosphothreonine. Serine 52 carries the post-translational modification Phosphoserine. Histidine 58 is a binding site for heme b. Phosphoserine is present on serine 72. Histidine 87 contacts heme b.

The protein belongs to the globin family. As to quaternary structure, heterotetramer of two zeta chains and two epsilon chains.

Functionally, the zeta chain is an alpha-type chain of mammalian embryonic hemoglobin. This is Hemoglobin subunit zeta from Sus scrofa (Pig).